Consider the following 307-residue polypeptide: MELLFLGTGAGVPAKERNVSSVALQLLGERGATWLFDCGEATQHQILHTAIRPRRIEHIFITHLHGDHLFGLPGLLGSRSFQSGETPLTVFGPKGIRSFVETALAVSGTKLRYELNIVEIDEGVIFDDERFSVIAKRLDHGMPSYGFRVVEKDLPGPLLVERLQALGVRPGPIYQEIKQGKTVVLDDGTVIDGREFVGPPQKGRIVAVLGDTRFCEAAIELARDADVVVHEATFAAAEQRLAHDYFHSTTTDAAEVARRAGAKRLILTHISSRYQGEAALQLVAEARSVFPNTELAVDFASFSIPRG.

Zn(2+) contacts are provided by His-63, His-65, Asp-67, His-68, His-140, Asp-211, and His-269. Catalysis depends on Asp-67, which acts as the Proton acceptor.

Belongs to the RNase Z family. Homodimer. Requires Zn(2+) as cofactor.

The enzyme catalyses Endonucleolytic cleavage of RNA, removing extra 3' nucleotides from tRNA precursor, generating 3' termini of tRNAs. A 3'-hydroxy group is left at the tRNA terminus and a 5'-phosphoryl group is left at the trailer molecule.. Zinc phosphodiesterase, which displays some tRNA 3'-processing endonuclease activity. Probably involved in tRNA maturation, by removing a 3'-trailer from precursor tRNA. The protein is Ribonuclease Z of Geobacillus kaustophilus (strain HTA426).